Consider the following 494-residue polypeptide: 4-trimethylaminobutyraldehyde dehydrogenase (494 aa).

Ser2 bears the N-acetylserine mark. Position 30 is an N6-acetyllysine; alternate (Lys30). Position 30 is an N6-succinyllysine; alternate (Lys30). The residue at position 59 (Lys59) is an N6-succinyllysine. NAD(+) contacts are provided by residues Lys180 and 232–236 (GSVPT). The active-site Proton acceptor is the Glu254. Residue Cys288 is the Nucleophile of the active site. Lys298 is modified (N6-acetyllysine). At Lys303 the chain carries N6-acetyllysine; alternate. Lys303 carries the post-translational modification N6-succinyllysine; alternate. Lys344 bears the N6-acetyllysine mark. Glu391 provides a ligand contact to NAD(+).

Belongs to the aldehyde dehydrogenase family. In terms of assembly, homotetramer.

It localises to the cytoplasm. The protein resides in the cytosol. It carries out the reaction 4-(trimethylamino)butanal + NAD(+) + H2O = 4-(trimethylamino)butanoate + NADH + 2 H(+). The catalysed reaction is an aldehyde + NAD(+) + H2O = a carboxylate + NADH + 2 H(+). The enzyme catalyses 4-aminobutanal + NAD(+) + H2O = 4-aminobutanoate + NADH + 2 H(+). It catalyses the reaction formaldehyde + NAD(+) + H2O = formate + NADH + 2 H(+). It carries out the reaction acetaldehyde + NAD(+) + H2O = acetate + NADH + 2 H(+). The catalysed reaction is imidazole-4-acetaldehyde + NAD(+) + H2O = imidazole-4-acetate + NADH + 2 H(+). The enzyme catalyses acrolein + NAD(+) + H2O = acrylate + NADH + 2 H(+). It catalyses the reaction (5-hydroxyindol-3-yl)acetaldehyde + NAD(+) + H2O = (5-hydroxyindol-3-yl)acetate + NADH + 2 H(+). It carries out the reaction 3,4-dihydroxyphenylacetaldehyde + NAD(+) + H2O = 3,4-dihydroxyphenylacetate + NADH + 2 H(+). The catalysed reaction is spermine monoaldehyde + NAD(+) + H2O = N-(2-carboxyethyl)spermidine + NADH + 2 H(+). The enzyme catalyses propanal + NAD(+) + H2O = propanoate + NADH + 2 H(+). It catalyses the reaction butanal + NAD(+) + H2O = butanoate + NADH + 2 H(+). It carries out the reaction pentanal + NAD(+) + H2O = pentanoate + NADH + 2 H(+). The catalysed reaction is hexanal + NAD(+) + H2O = hexanoate + NADH + 2 H(+). It participates in amine and polyamine biosynthesis; carnitine biosynthesis. Functionally, converts gamma-trimethylaminobutyraldehyde into gamma-butyrobetaine with high efficiency (in vitro). Can catalyze the irreversible oxidation of a broad range of aldehydes to the corresponding acids in an NAD-dependent reaction, but with low efficiency. Catalyzes the oxidation of aldehydes arising from biogenic amines and polyamines. The sequence is that of 4-trimethylaminobutyraldehyde dehydrogenase from Mus musculus (Mouse).